Consider the following 214-residue polypeptide: ATP phosphoribosyltransferase (214 aa).

Belongs to the ATP phosphoribosyltransferase family. Short subfamily. As to quaternary structure, heteromultimer composed of HisG and HisZ subunits.

The protein resides in the cytoplasm. It catalyses the reaction 1-(5-phospho-beta-D-ribosyl)-ATP + diphosphate = 5-phospho-alpha-D-ribose 1-diphosphate + ATP. The protein operates within amino-acid biosynthesis; L-histidine biosynthesis; L-histidine from 5-phospho-alpha-D-ribose 1-diphosphate: step 1/9. Catalyzes the condensation of ATP and 5-phosphoribose 1-diphosphate to form N'-(5'-phosphoribosyl)-ATP (PR-ATP). Has a crucial role in the pathway because the rate of histidine biosynthesis seems to be controlled primarily by regulation of HisG enzymatic activity. This is ATP phosphoribosyltransferase from Methylobacillus flagellatus (strain ATCC 51484 / DSM 6875 / VKM B-1610 / KT).